The primary structure comprises 216 residues: Glycerol-3-phosphate acyltransferase 3 (216 aa).

5 helical membrane-spanning segments follow: residues 6 to 26 (LLLVVIVSYLLGSIPFGYLVS), 58 to 78 (LVAALDVVKGVSAVAFAGLVI), 92 to 112 (ILFAQVLAGLAAVAGHIWPVF), 125 to 145 (FGGMIALCPVAAIFGGEVLII), and 158 to 178 (ITGVVGAYALLIPLTFISGFP).

It belongs to the PlsY family. Probably interacts with PlsX.

The protein localises to the cell membrane. The enzyme catalyses an acyl phosphate + sn-glycerol 3-phosphate = a 1-acyl-sn-glycero-3-phosphate + phosphate. The protein operates within lipid metabolism; phospholipid metabolism. Functionally, catalyzes the transfer of an acyl group from acyl-phosphate (acyl-PO(4)) to glycerol-3-phosphate (G3P) to form lysophosphatidic acid (LPA). This enzyme utilizes acyl-phosphate as fatty acyl donor, but not acyl-CoA or acyl-ACP. The chain is Glycerol-3-phosphate acyltransferase 3 from Dehalococcoides mccartyi (strain ATCC BAA-2266 / KCTC 15142 / 195) (Dehalococcoides ethenogenes (strain 195)).